The sequence spans 1992 residues: Otoferlin (1992 aa).

3 consecutive C2 domains span residues 1–98 (MALV…EVSD), 241–362 (KRSK…HKWA), and 405–536 (IEGN…FLPT). Residues 1-1958 (MALVVHLKTV…IRYFIWHNYR (1958 aa)) lie on the Cytoplasmic side of the membrane. Positions 655–699 (PALAKKKKEGGGESEEEESELIHNSSEEEAEDDGDLTSVPSTPPM) are disordered. 2 consecutive C2 domains span residues 952–1077 (IQAV…PPRF) and 1124–1250 (RGPI…NNWA). Ca(2+) contacts are provided by D984, D990, D1046, and D1048. Residues 1282–1363 (VKVDLNEDEK…ESAEIKADDF (82 aa)) adopt a coiled-coil conformation. Disordered regions lie at residues 1288–1311 (EDEK…EEEP) and 1354–1399 (ESAE…KPKV). Residues 1356–1399 (AEIKADDFPMKGTKPKEKSKDKKSTKDKKKNNDGTEKRPPKPKV) show a composition bias toward basic and acidic residues. 2 consecutive C2 domains span residues 1470–1588 (DPNM…ATCG) and 1711–1860 (PAPG…KQCS). Ca(2+) contacts are provided by D1503, D1509, D1558, D1560, D1566, D1831, S1834, and D1837. Residues 1959 to 1979 (WLILKALALLLLLLLVGLFLY) traverse the membrane as a helical segment. Residues 1980 to 1992 (SIPGYLVKKLLGA) lie on the Extracellular side of the membrane.

The protein belongs to the ferlin family. Requires Ca(2+) as cofactor.

It localises to the cytoplasmic vesicle. It is found in the secretory vesicle. The protein localises to the synaptic vesicle membrane. The protein resides in the basolateral cell membrane. Its subcellular location is the endoplasmic reticulum membrane. It localises to the golgi apparatus membrane. It is found in the presynaptic cell membrane. The protein localises to the cell membrane. Key calcium ion sensor involved in the Ca(2+)-triggered synaptic vesicle-plasma membrane fusion and in the control of neurotransmitter release at these output synapses. In Danio rerio (Zebrafish), this protein is Otoferlin (otof).